The sequence spans 568 residues: Sulfate adenylyltransferase (568 aa).

The tract at residues 1–162 (MANSPHGGVL…IEAVNKLNHY (162 aa)) is N-terminal. Residues 163-388 (DYVALRYSPA…LRESSPPRAT (226 aa)) form a catalytic region. Position 190 (Q190) interacts with sulfate. ATP-binding positions include 190 to 193 (QTRN) and 284 to 287 (GRDH). Active-site residues include T191, R192, and N193. R192 contributes to the sulfate binding site. A sulfate-binding site is contributed by A288. V326 contacts ATP. The interval 389 to 568 (QGFTIFLTGY…LESEGYFDRL (180 aa)) is allosteric regulation domain; adenylyl-sulfate kinase-like. 3'-phosphoadenylyl sulfate-binding positions include 428-431 (DTVR), R445, 471-472 (IA), and R510.

In the N-terminal section; belongs to the sulfate adenylyltransferase family. It in the C-terminal section; belongs to the APS kinase family. As to quaternary structure, homohexamer. Dimer of trimers.

It is found in the cytoplasm. It carries out the reaction sulfate + ATP + H(+) = adenosine 5'-phosphosulfate + diphosphate. Its pathway is sulfur metabolism; hydrogen sulfide biosynthesis; sulfite from sulfate: step 1/3. Allosterically inhibited by 3'-phosphoadenosine 5'-phosphosulfate (PAPS). Functionally, catalyzes the first intracellular reaction of sulfate assimilation, forming adenosine-5'-phosphosulfate (APS) from inorganic sulfate and ATP. Plays an important role in sulfate activation as a component of the biosynthesis pathway of sulfur-containing amino acids. The protein is Sulfate adenylyltransferase of Aspergillus terreus.